The primary structure comprises 177 residues: Large ribosomal subunit protein bL9 (177 aa).

The protein belongs to the bacterial ribosomal protein bL9 family.

In terms of biological role, binds to the 23S rRNA. The sequence is that of Large ribosomal subunit protein bL9 from Rhodopirellula baltica (strain DSM 10527 / NCIMB 13988 / SH1).